We begin with the raw amino-acid sequence, 773 residues long: Probable serine/threonine-protein kinase MARK-C (773 aa).

Over residues 1-27 (MESNKSSSHGDVSTSPSFLNNHHQFNN) the composition is skewed to polar residues. A disordered region spans residues 1 to 32 (MESNKSSSHGDVSTSPSFLNNHHQFNNGGDII). The Protein kinase domain maps to 46–300 (YEVGKTLGNG…IQELKNHPWT (255 aa)). Residues 52–60 (LGNGTFGKV) and Lys-75 contribute to the ATP site. Residue Asp-171 is the Proton acceptor of the active site. The stretch at 362 to 390 (RYASKEVENLKSKLELLSKRKKSFSDKRN) forms a coiled coil. 3 disordered regions span residues 382–445 (KKSF…SQGS), 462–487 (DNDI…NKDI), and 558–588 (YSIQ…TNLR). The segment covering 405 to 443 (DLSSNNNNNQQQQNSPPSKTNSSSTSSSNRESNNNSPSQ) has biased composition (low complexity). Residues 445 to 474 (SIKEISLDELDNHIEQLDNDIENSDNNKSS) adopt a coiled-coil conformation. Polar residues predominate over residues 468–478 (SDNNKSSSLTR). A compositionally biased stretch (low complexity) spans 561 to 573 (QQQQLQQQQQQQQ). Positions 724–773 (CFDEDNSVKFQIEIVKICNLDLTGIQLKRLSGDTWKYKDICTELVESMKL) constitute a KA1 domain.

The protein belongs to the protein kinase superfamily. CAMK Ser/Thr protein kinase family. SNF1 subfamily.

The enzyme catalyses L-seryl-[protein] + ATP = O-phospho-L-seryl-[protein] + ADP + H(+). The catalysed reaction is L-threonyl-[protein] + ATP = O-phospho-L-threonyl-[protein] + ADP + H(+). The chain is Probable serine/threonine-protein kinase MARK-C (mrkC) from Dictyostelium discoideum (Social amoeba).